A 177-amino-acid chain; its full sequence is CRIB domain-containing protein RIC8 (177 aa).

Residues 17-30 (IGTPTDVKHVAHIG) enclose the CRIB domain. Residues 72 to 89 (STRSRDIPRLPKSSRERS) are compositionally biased toward basic and acidic residues. Positions 72-177 (STRSRDIPRL…SSTSDAGYLT (106 aa)) are disordered. Low complexity predominate over residues 158 to 171 (GSQVESISDSSSTS).

In terms of biological role, functions as a downstream effector of Rho-related GTP binding proteins of the 'Rho of Plants' (ROPs) family. Participates in the propagation of ROP GTPase signals in specific cellular responses. The polypeptide is CRIB domain-containing protein RIC8 (RIC8) (Arabidopsis thaliana (Mouse-ear cress)).